The sequence spans 178 residues: NADH-quinone oxidoreductase subunit B (178 aa).

[4Fe-4S] cluster contacts are provided by Cys45, Cys46, Cys111, and Cys140.

Belongs to the complex I 20 kDa subunit family. As to quaternary structure, NDH-1 is composed of 15 different subunits. Subunits NuoB, C, D, E, F, and G constitute the peripheral sector of the complex. [4Fe-4S] cluster is required as a cofactor.

The protein resides in the cell membrane. The catalysed reaction is a quinone + NADH + 5 H(+)(in) = a quinol + NAD(+) + 4 H(+)(out). In terms of biological role, NDH-1 shuttles electrons from NADH, via FMN and iron-sulfur (Fe-S) centers, to quinones in the respiratory chain. The immediate electron acceptor for the enzyme in this species is believed to be a menaquinone. Couples the redox reaction to proton translocation (for every two electrons transferred, four hydrogen ions are translocated across the cytoplasmic membrane), and thus conserves the redox energy in a proton gradient. The chain is NADH-quinone oxidoreductase subunit B from Deinococcus geothermalis (strain DSM 11300 / CIP 105573 / AG-3a).